The primary structure comprises 346 residues: GTPase Obg (346 aa).

Residues 1–159 form the Obg domain; the sequence is MRFVDRCRLK…RELRLELKVL (159 aa). Residues 122 to 147 form a disordered region; that stretch reads KGGRGNLHFKSPHDRAPRRAEPGEPG. Residues 132 to 147 are compositionally biased toward basic and acidic residues; the sequence is SPHDRAPRRAEPGEPG. An OBG-type G domain is found at 160–336; the sequence is ADVGLLGFPN…LVRELAALAR (177 aa). Residues 166–173, 191–195, 218–221, 288–291, and 317–319 contribute to the GTP site; these read GFPNAGKS, FTTLT, DIPG, TKAD, and SAA. Residues serine 173 and threonine 193 each coordinate Mg(2+).

This sequence belongs to the TRAFAC class OBG-HflX-like GTPase superfamily. OBG GTPase family. As to quaternary structure, monomer. Mg(2+) is required as a cofactor.

The protein resides in the cytoplasm. Its function is as follows. An essential GTPase which binds GTP, GDP and possibly (p)ppGpp with moderate affinity, with high nucleotide exchange rates and a fairly low GTP hydrolysis rate. Plays a role in control of the cell cycle, stress response, ribosome biogenesis and in those bacteria that undergo differentiation, in morphogenesis control. This chain is GTPase Obg, found in Sorangium cellulosum (strain So ce56) (Polyangium cellulosum (strain So ce56)).